The chain runs to 305 residues: Protoheme IX farnesyltransferase 2 (305 aa).

Transmembrane regions (helical) follow at residues 38–58 (LITT…SFLG), 60–80 (LNTV…SCAV), 115–135 (ILLI…AAVI), 157–177 (INTV…WTAV), 181–201 (IGVV…PHFL), 236–256 (VACL…IVIL), and 285–305 (FVYS…FTLF).

The protein belongs to the UbiA prenyltransferase family. Protoheme IX farnesyltransferase subfamily. As to quaternary structure, interacts with CtaA.

The protein localises to the cell membrane. It catalyses the reaction heme b + (2E,6E)-farnesyl diphosphate + H2O = Fe(II)-heme o + diphosphate. It functions in the pathway porphyrin-containing compound metabolism; heme O biosynthesis; heme O from protoheme: step 1/1. In terms of biological role, converts heme B (protoheme IX) to heme O by substitution of the vinyl group on carbon 2 of heme B porphyrin ring with a hydroxyethyl farnesyl side group. The sequence is that of Protoheme IX farnesyltransferase 2 from Bacillus velezensis (strain DSM 23117 / BGSC 10A6 / LMG 26770 / FZB42) (Bacillus amyloliquefaciens subsp. plantarum).